Consider the following 142-residue polypeptide: Bacilliredoxin ABC2448 (142 aa).

The protein belongs to the bacilliredoxin family.

This is Bacilliredoxin ABC2448 from Shouchella clausii (strain KSM-K16) (Alkalihalobacillus clausii).